We begin with the raw amino-acid sequence, 437 residues long: Probable D-serine dehydratase (437 aa).

K106 bears the N6-(pyridoxal phosphate)lysine mark.

It belongs to the serine/threonine dehydratase family. DsdA subfamily. Pyridoxal 5'-phosphate serves as cofactor.

The catalysed reaction is D-serine = pyruvate + NH4(+). The chain is Probable D-serine dehydratase from Hahella chejuensis (strain KCTC 2396).